The sequence spans 135 residues: Calcium-binding protein KIC (135 aa).

The region spanning 74-109 is the EF-hand domain; the sequence is MSKEDAQGMVREGDLDGDGALNQTEFCVLMVRLSPE. Residues D87, D89, D91, and E98 each contribute to the Ca(2+) site.

Interacts with KCBP (via C-terminus). KIC and calmodulin show competitive binding to KCBP. Interacts with CML42. Binds to ABCG36. Expressed in stems, leaves and flowers.

In terms of biological role, calcium-binding regulatory protein that interacts with kinesin motor protein KCBP in a calcium-dependent manner. Inhibits KCBP microtubule binding activity and microtubule-stimulated ATPase activity. Involved in the regulation of trichome branching through its interaction with KCBP. The sequence is that of Calcium-binding protein KIC from Arabidopsis thaliana (Mouse-ear cress).